Consider the following 266-residue polypeptide: Interleukin-1 beta (266 aa).

The propeptide occupies 1-113 (MATVPEPTNE…ETYDDDLLCD (113 aa)).

The protein belongs to the IL-1 family. Monomer. In its precursor form, weakly interacts with full-length MEFV; the mature cytokine does not interact at all. Interacts with integrins ITGAV:ITGBV and ITGA5:ITGB1; integrin-binding is required for IL1B signaling. Interacts with cargo receptor TMED10; the interaction is direct and is required for the secretion of IL1B mature form. Interacts with HSP90AB1; the interaction facilitates cargo translocation into the ERGIC. Interacts with HSP90B1; the interaction facilitates cargo translocation into the ERGIC.

The protein localises to the cytoplasm. It localises to the cytosol. The protein resides in the secreted. Its subcellular location is the lysosome. It is found in the extracellular exosome. In terms of biological role, potent pro-inflammatory cytokine. Initially discovered as the major endogenous pyrogen, induces prostaglandin synthesis, neutrophil influx and activation, T-cell activation and cytokine production, B-cell activation and antibody production, and fibroblast proliferation and collagen production. Promotes Th17 differentiation of T-cells. Synergizes with IL12/interleukin-12 to induce IFNG synthesis from T-helper 1 (Th1) cells. Plays a role in angiogenesis by inducing VEGF production synergistically with TNF and IL6. Involved in transduction of inflammation downstream of pyroptosis: its mature form is specifically released in the extracellular milieu by passing through the gasdermin-D (GSDMD) pore. This Delphinapterus leucas (Beluga whale) protein is Interleukin-1 beta (IL1B).